Here is a 526-residue protein sequence, read N- to C-terminus: Peptide chain release factor 3 (526 aa).

In terms of domain architecture, tr-type G spans D9–L277. Residues S18 to T25, D86 to H90, and N140 to D143 contribute to the GTP site.

It belongs to the TRAFAC class translation factor GTPase superfamily. Classic translation factor GTPase family. PrfC subfamily.

It is found in the cytoplasm. Its function is as follows. Increases the formation of ribosomal termination complexes and stimulates activities of RF-1 and RF-2. It binds guanine nucleotides and has strong preference for UGA stop codons. It may interact directly with the ribosome. The stimulation of RF-1 and RF-2 is significantly reduced by GTP and GDP, but not by GMP. The chain is Peptide chain release factor 3 from Shewanella sp. (strain ANA-3).